A 286-amino-acid chain; its full sequence is Enoyl-CoA hydratase ChsH3 (286 aa).

Residues 163 to 271 enclose the MaoC-like domain; the sequence is APERAPDLQV…RLVASVVAPT (109 aa). Active-site residues include Asp189 and His194.

This sequence belongs to the enoyl-CoA hydratase/isomerase family. In terms of assembly, homodimer.

It catalyses the reaction (22E)-3-oxochola-4,22-dien-24-oyl-CoA + H2O = (22S)-hydroxy-3-oxo-chol-4-ene-24-oyl-CoA. It functions in the pathway steroid metabolism; cholesterol degradation. Its function is as follows. Degradation of the cholesterol side chain involves 3 multistep beta-oxidation cycles, this is involved in the second cycle. Hydrates bulky steroid enoyl-CoA esters, has highest activity with 3-OCDO-CoA (3-oxochol-4,22-dien-24-oyl-CoA) making (22S)-HOCO-CoA, followed by octenoyl-CoA, with weaker activity on 3-OCDS-CoA (3-oxocholest-4,24-dien-26-oyl-CoA) and none on 3-OPDC-CoA (3-oxo-pregna-4,17-diene-20- carboxyl-CoA). Hydrates the same substrate as EchA19, but the 2 enzymes make different stereoisomers of the product. The sequence is that of Enoyl-CoA hydratase ChsH3 from Mycobacterium tuberculosis (strain ATCC 25618 / H37Rv).